Reading from the N-terminus, the 342-residue chain is Periplasmic protein TorT (342 aa).

The first 18 residues, 1 to 18, serve as a signal peptide directing secretion; that stretch reads MRVLLFLLLSLFMLPAFS.

This sequence belongs to the bacterial solute-binding protein 2 family.

It is found in the periplasm. In terms of biological role, upon binding a putative inducer it probably interacts with TorS and allows it to play a role in the induction of the torCAD operon for trimethylamine N-oxide reductase. The protein is Periplasmic protein TorT (torT) of Escherichia coli (strain K12).